The following is a 253-amino-acid chain: 3-deoxy-manno-octulosonate cytidylyltransferase (253 aa).

Belongs to the KdsB family.

The protein resides in the cytoplasm. The enzyme catalyses 3-deoxy-alpha-D-manno-oct-2-ulosonate + CTP = CMP-3-deoxy-beta-D-manno-octulosonate + diphosphate. Its pathway is nucleotide-sugar biosynthesis; CMP-3-deoxy-D-manno-octulosonate biosynthesis; CMP-3-deoxy-D-manno-octulosonate from 3-deoxy-D-manno-octulosonate and CTP: step 1/1. It functions in the pathway bacterial outer membrane biogenesis; lipopolysaccharide biosynthesis. Its function is as follows. Activates KDO (a required 8-carbon sugar) for incorporation into bacterial lipopolysaccharide in Gram-negative bacteria. This Acidithiobacillus ferrooxidans (strain ATCC 23270 / DSM 14882 / CIP 104768 / NCIMB 8455) (Ferrobacillus ferrooxidans (strain ATCC 23270)) protein is 3-deoxy-manno-octulosonate cytidylyltransferase.